Consider the following 217-residue polypeptide: ATP-dependent Clp protease proteolytic subunit 2 (217 aa).

Residue Ser121 is the Nucleophile of the active site. His146 is a catalytic residue.

The protein belongs to the peptidase S14 family. As to quaternary structure, fourteen ClpP subunits assemble into 2 heptameric rings which stack back to back to give a disk-like structure with a central cavity, resembling the structure of eukaryotic proteasomes.

The protein localises to the cytoplasm. The enzyme catalyses Hydrolysis of proteins to small peptides in the presence of ATP and magnesium. alpha-casein is the usual test substrate. In the absence of ATP, only oligopeptides shorter than five residues are hydrolyzed (such as succinyl-Leu-Tyr-|-NHMec, and Leu-Tyr-Leu-|-Tyr-Trp, in which cleavage of the -Tyr-|-Leu- and -Tyr-|-Trp bonds also occurs).. Functionally, cleaves peptides in various proteins in a process that requires ATP hydrolysis. Has a chymotrypsin-like activity. Plays a major role in the degradation of misfolded proteins. The sequence is that of ATP-dependent Clp protease proteolytic subunit 2 from Paraburkholderia xenovorans (strain LB400).